A 299-amino-acid polypeptide reads, in one-letter code: Serine/threonine-protein kinase 1 (299 aa).

The Protein kinase domain maps to 39 to 277 (IATKPMFEGG…FKGLVSHPWF (239 aa)). ATP is bound by residues 45-53 (FEGGRRNNV) and Lys66. Asp153 functions as the Proton acceptor in the catalytic mechanism.

It belongs to the protein kinase superfamily. Ser/Thr protein kinase family.

It is found in the virion. The protein resides in the host cytoplasm. The catalysed reaction is L-seryl-[protein] + ATP = O-phospho-L-seryl-[protein] + ADP + H(+). It carries out the reaction L-threonyl-[protein] + ATP = O-phospho-L-threonyl-[protein] + ADP + H(+). Essential for viral replication. It may mediate the virus progression through DNA replication. The protein is Serine/threonine-protein kinase 1 of African swine fever virus (isolate Tick/Malawi/Lil 20-1/1983) (ASFV).